A 68-amino-acid chain; its full sequence is Adipokinetic prohormone type 1 (68 aa).

A signal peptide spans 1–20 (MNKIYFVIVFVACFCLFAEA). Residue glutamine 21 is modified to Pyrrolidone carboxylic acid. Residue glycine 30 is modified to Glycine amide. Residues 34-68 (SGVAPMSCKNEEAVATIFKLIQNEAERFIICQQKS) constitute a propeptide that is removed on maturation.

Expressed in antennal lobe (AL), corpora cardiaca (CC), corpora allata (CA) and gnathal ganglion (GNG) (at protein level). Expression in CC and CA detected in all animals, expression in GNG in some animals and in AL in few animals (at protein level).

Its subcellular location is the secreted. Its function is as follows. This hormone, released from cells in the corpora cardiaca, causes release of diglycerides from the fat body and stimulation of muscles to use these diglycerides as an energy source during energy-demanding processes. This chain is Adipokinetic prohormone type 1, found in Agrotis ipsilon (Black cutworm moth).